We begin with the raw amino-acid sequence, 244 residues long: uncharacterized protein (244 aa).

It belongs to the MtxX family.

This is an uncharacterized protein from Methanocaldococcus jannaschii (strain ATCC 43067 / DSM 2661 / JAL-1 / JCM 10045 / NBRC 100440) (Methanococcus jannaschii).